The following is a 905-amino-acid chain: Chitin synthase 3B (905 aa).

Over residues 1 to 10 (MAYNGRDQEY) the composition is skewed to basic and acidic residues. Residues 1-136 (MAYNGRDQEY…GGGGGLGRSK (136 aa)) form a disordered region. A compositionally biased stretch (gly residues) spans 81-93 (GPTGYGDTGGSFG). N-linked (GlcNAc...) asparagine glycosylation is present at Asn536. The helical transmembrane segment at 562–584 (MFFLHIQLIYTTLNTMFAWFSLG) threads the bilayer. An N-linked (GlcNAc...) asparagine glycan is attached at Asn601. 6 helical membrane passes run 618–638 (IVNALLQYLYLAFVMLQFILA), 653–673 (SFMVFGLIQGYILVLSAYLVV), 705–725 (VILVALITIYGLNFIASFMYL), 733–753 (SFPYYLVLMSTYINILMVYAF), 832–852 (TGLVVCWLFGNILLIVCITST), and 873–893 (FLLYATAVLSLVRFFGFLWFL).

It belongs to the chitin synthase family. Class III subfamily.

The protein localises to the cell membrane. The catalysed reaction is [(1-&gt;4)-N-acetyl-beta-D-glucosaminyl](n) + UDP-N-acetyl-alpha-D-glucosamine = [(1-&gt;4)-N-acetyl-beta-D-glucosaminyl](n+1) + UDP + H(+). Its function is as follows. Polymerizes chitin, a structural polymer of the cell wall and septum, by transferring the sugar moiety of UDP-GlcNAc to the non-reducing end of the growing chitin polymer. Plays essential functions in fungal survival and host infection. In Gibberella zeae (strain ATCC MYA-4620 / CBS 123657 / FGSC 9075 / NRRL 31084 / PH-1) (Wheat head blight fungus), this protein is Chitin synthase 3B.